We begin with the raw amino-acid sequence, 259 residues long: Binding partner of ACD11 1 (259 aa).

The 72-residue stretch at 6–77 folds into the RRM domain; that stretch reads RSVKVGNLSS…QSVIIELAPN (72 aa). The segment at 219–259 is disordered; that stretch reads GEVGQKTKEKVEAEQPSQPAQSQQQLPEGYSPIHSSEYSKN. The span at 232 to 243 shows a compositional bias: low complexity; sequence EQPSQPAQSQQQ.

Interacts with ACD11, PR1F2 and PR1F3.

The protein resides in the cytoplasm. The protein localises to the membrane. In Arabidopsis thaliana (Mouse-ear cress), this protein is Binding partner of ACD11 1 (BPA1).